Here is an 843-residue protein sequence, read N- to C-terminus: Phosphatidylinositol-glycan-specific phospholipase D (843 aa).

The first 23 residues, 1–23 (MSVGRLWSGLLLLLLFFCSRSSS), serve as a signal peptide directing secretion. N-linked (GlcNAc...) asparagine glycans are attached at residues N94, N271, N292, N308, and N322. FG-GAP repeat units follow at residues 368–429 (SPSA…GLPP), 435–498 (DKEA…GRLS), 500–560 (SPNI…RNDK), 564–625 (TLDE…SLGR), 635–695 (QREI…GATR), 707–773 (ALFS…TLGD), and 791–843 (QYVL…FSSD). N483, N502, N592, N605, and N661 each carry an N-linked (GlcNAc...) asparagine glycan.

The protein belongs to the GPLD1 family. Monomer. Glycosylated.

The protein resides in the secreted. It catalyses the reaction a 6-(alpha-D-glucosaminyl)-1-(1,2-diacyl-sn-glycero-3-phospho)-1D-myo-inositol + H2O = 6-(alpha-D-glucosaminyl)-1D-myo-inositol + a 1,2-diacyl-sn-glycero-3-phosphate + H(+). Functionally, this protein hydrolyzes the inositol phosphate linkage in proteins anchored by phosphatidylinositol glycans (GPI-anchor) thus releasing these proteins from the membrane. The chain is Phosphatidylinositol-glycan-specific phospholipase D (Gpld1) from Rattus norvegicus (Rat).